A 206-amino-acid chain; its full sequence is Uridine kinase (206 aa).

Residue 9–16 participates in ATP binding; it reads GGSGSGKT.

It belongs to the uridine kinase family.

It is found in the cytoplasm. It carries out the reaction uridine + ATP = UMP + ADP + H(+). It catalyses the reaction cytidine + ATP = CMP + ADP + H(+). It participates in pyrimidine metabolism; CTP biosynthesis via salvage pathway; CTP from cytidine: step 1/3. It functions in the pathway pyrimidine metabolism; UMP biosynthesis via salvage pathway; UMP from uridine: step 1/1. The sequence is that of Uridine kinase from Borrelia turicatae (strain 91E135).